The sequence spans 374 residues: Chaperone protein DnaJ (374 aa).

The region spanning 5 to 70 is the J domain; the sequence is DFYEILGLGK…QKRDAYDRYG (66 aa). Residues 28–47 form a disordered region; the sequence is LAMKHHPDRNPDSKGAEDKF. Residues 35–47 show a composition bias toward basic and acidic residues; sequence DRNPDSKGAEDKF. The CR-type zinc-finger motif lies at 134-212; it reads GYDTTIRVPS…CSGAGKIKRN (79 aa). Residues Cys-147, Cys-150, Cys-164, Cys-167, Cys-186, Cys-189, Cys-200, and Cys-203 each coordinate Zn(2+). CXXCXGXG motif repeat units follow at residues 147–154, 164–171, 186–193, and 200–207; these read CETCDGSG, CTTCGGHG, CPKCHGSG, and CTACSGAG.

It belongs to the DnaJ family. In terms of assembly, homodimer. It depends on Zn(2+) as a cofactor.

The protein resides in the cytoplasm. Its function is as follows. Participates actively in the response to hyperosmotic and heat shock by preventing the aggregation of stress-denatured proteins and by disaggregating proteins, also in an autonomous, DnaK-independent fashion. Unfolded proteins bind initially to DnaJ; upon interaction with the DnaJ-bound protein, DnaK hydrolyzes its bound ATP, resulting in the formation of a stable complex. GrpE releases ADP from DnaK; ATP binding to DnaK triggers the release of the substrate protein, thus completing the reaction cycle. Several rounds of ATP-dependent interactions between DnaJ, DnaK and GrpE are required for fully efficient folding. Also involved, together with DnaK and GrpE, in the DNA replication of plasmids through activation of initiation proteins. This is Chaperone protein DnaJ from Herminiimonas arsenicoxydans.